Here is a 341-residue protein sequence, read N- to C-terminus: Glyceraldehyde-3-phosphate dehydrogenase 3.1 (341 aa).

NAD(+) is bound by residues 13-14 (RI), Asp-35, and Arg-85. D-glyceraldehyde 3-phosphate contacts are provided by residues 157 to 159 (SCT), Thr-188, 217 to 218 (TG), and Arg-240. The active-site Nucleophile is the Cys-158. Asn-322 is a binding site for NAD(+).

This sequence belongs to the glyceraldehyde-3-phosphate dehydrogenase family. Homotetramer.

Its subcellular location is the cytoplasm. The catalysed reaction is D-glyceraldehyde 3-phosphate + phosphate + NAD(+) = (2R)-3-phospho-glyceroyl phosphate + NADH + H(+). It functions in the pathway carbohydrate degradation; glycolysis; pyruvate from D-glyceraldehyde 3-phosphate: step 1/5. The polypeptide is Glyceraldehyde-3-phosphate dehydrogenase 3.1 (Caenorhabditis briggsae).